A 1657-amino-acid chain; its full sequence is Alsin (1657 aa).

3 RCC1 repeats span residues 60–109 (GEVY…VTDN), 110–168 (GVAY…LSIS), and 169–219 (REIW…LVQC). The segment at 432–481 (TGAQAGSSAIGPEGLKDSREEQVKQESMQGKKSSSLVDIREEETEGGSRR) is disordered. Residues 445 to 455 (GLKDSREEQVK) are compositionally biased toward basic and acidic residues. Positions 456–467 (QESMQGKKSSSL) are enriched in polar residues. Phosphoserine is present on residues Ser465, Ser466, Ser483, and Ser492. Thr510 is modified (phosphothreonine). 2 RCC1 repeats span residues 526–577 (TEVW…LTAK) and 578–628 (SQVY…LVDT). An N6-acetyllysine modification is found at Lys533. In terms of domain architecture, DH spans 690 to 885 (GYIASLHELA…ECLALHLGRK (196 aa)). A PH domain is found at 901–1007 (GKMTDSLRKP…RAISQAVDQA (107 aa)). MORN repeat units follow at residues 1049–1071 (YDGRWLSGKPHGRGVLKWPDGKM), 1072–1094 (YSGMFRNGLEDGYGEYRIPNKAM), 1100–1122 (YVGHWKEGKMCGQGVYSYASGEV), 1123–1145 (FEGCFQDNMRHGHGLLRSGKLTS), 1151–1173 (FIGQWVMDKKAGYGVFDDITRGE), 1175–1197 (YMGMWQDDVCQGNGVVVTQFGLY), 1198–1220 (YEGNFHLNKMMGNGVLLSEDDTI), and 1221–1244 (YEGEFSDDWTLSGKGTLTMPNGDY). Ser1335 carries the phosphoserine modification. The VPS9 domain occupies 1513 to 1657 (KQPDIALLGF…YYQIQREKLN (145 aa)).

As to quaternary structure, forms a heteromeric complex with ALS2CL. Interacts with ALS2CL.

Functionally, may act as a GTPase regulator. Controls survival and growth of spinal motoneurons. This Pan troglodytes (Chimpanzee) protein is Alsin (ALS2).